The chain runs to 362 residues: Thiol protease aleurain (362 aa).

Residues 1 to 22 (MAHARVLLLALAVLATAAVAVA) form the signal peptide. Residues 23–143 (SSSSFADSNP…GNHLMRDAAA (121 aa)) constitute a propeptide, activation peptide. 2 disulfides stabilise this stretch: C165/C208 and C199/C241. The active site involves C168. An N-linked (GlcNAc...) asparagine glycan is attached at N188. N257 carries N-linked (GlcNAc...) asparagine glycosylation. Residues C299 and C349 are joined by a disulfide bond. Catalysis depends on residues H308 and N328.

Belongs to the peptidase C1 family.

The protein resides in the vacuole. The catalysed reaction is Hydrolysis of proteins, acting as an aminopeptidase (notably, cleaving Arg-|-Xaa bonds) as well as an endopeptidase.. Its function is as follows. May play a role in proteolysis leading to mobilization of nitrogen during senescence and starvation. The sequence is that of Thiol protease aleurain from Hordeum vulgare (Barley).